The sequence spans 190 residues: Orotate phosphoribosyltransferase (190 aa).

Residue 114-122 coordinates 5-phospho-alpha-D-ribose 1-diphosphate; sequence EDVITTGGS. Orotate-binding residues include Thr-118 and Arg-146.

It belongs to the purine/pyrimidine phosphoribosyltransferase family. PyrE subfamily. Homodimer. Mg(2+) is required as a cofactor.

It catalyses the reaction orotidine 5'-phosphate + diphosphate = orotate + 5-phospho-alpha-D-ribose 1-diphosphate. Its pathway is pyrimidine metabolism; UMP biosynthesis via de novo pathway; UMP from orotate: step 1/2. Catalyzes the transfer of a ribosyl phosphate group from 5-phosphoribose 1-diphosphate to orotate, leading to the formation of orotidine monophosphate (OMP). The sequence is that of Orotate phosphoribosyltransferase from Pelotomaculum thermopropionicum (strain DSM 13744 / JCM 10971 / SI).